Here is a 309-residue protein sequence, read N- to C-terminus: Taste receptor type 2 member 31 (309 aa).

At 1–2 the chain is on the extracellular side; that stretch reads MT. The helical transmembrane segment at 3 to 23 threads the bilayer; sequence TFIPIIFSSLVMVMFVTGNFA. The Cytoplasmic segment spans residues 24-55; sequence NGFIALVNSIESVKRQKISYADQILTALAVSR. Residues 56–76 form a helical membrane-spanning segment; it reads IGLLWVLLLNWYSTVLNPAFY. Residues 77–100 lie on the Extracellular side of the membrane; sequence SVEVRTTAYNVWAVTGHFSNWLAT. Residues 101-121 traverse the membrane as a helical segment; the sequence is SLSIFYLLKIANFSNLIFLHL. The Cytoplasmic portion of the chain corresponds to 122–126; sequence KRRVK. Residues 127-147 form a helical membrane-spanning segment; the sequence is SVILVMLLGPLLFLACQLFVI. Topologically, residues 148–181 are extracellular; sequence NMKEIVQTKEYEGNXTWKIKLRSAVYLSDATVTT. Asparagine 161 carries N-linked (GlcNAc...) asparagine glycosylation. Residues 182–202 traverse the membrane as a helical segment; sequence LGNLVPFTLTLLCFLLLICSL. Residues 203-229 lie on the Cytoplasmic side of the membrane; it reads CKHLKKMQLHGKGSQDPSMKVHIKALQ. The chain crosses the membrane as a helical span at residues 230–250; the sequence is TVTSFLLLCAIYFLSIMISVW. The Extracellular segment spans residues 251 to 259; sequence SLGSLKNKP. Residues 260–280 form a helical membrane-spanning segment; that stretch reads VFMFCKAMRFSYPSIHPFILI. Topologically, residues 281 to 309 are cytoplasmic; that stretch reads WGNKKLKQTFLSVLQQVRYWVKGEKPSSP.

This sequence belongs to the G-protein coupled receptor T2R family.

It is found in the membrane. Receptor that may play a role in the perception of bitterness and is gustducin-linked. May play a role in sensing the chemical composition of the gastrointestinal content. The activity of this receptor may stimulate alpha gustducin, mediate PLC-beta-2 activation and lead to the gating of TRPM5. The chain is Taste receptor type 2 member 31 (TAS2R31) from Gorilla gorilla gorilla (Western lowland gorilla).